Here is a 358-residue protein sequence, read N- to C-terminus: G-protein coupled receptor 20 (358 aa).

The Extracellular segment spans residues 1 to 48 (MPSVSPAGPSAGAVPNATAVTTVRTNASGLEVPLFHLFARLDEELHGT). N-linked (GlcNAc...) asparagine glycans are attached at residues Asn16 and Asn26. Residues 49-69 (FPGLWLALMAVHGAIFLAGLV) traverse the membrane as a helical segment. Residues 70–86 (LNGLALYVFCCRTRAKT) are Cytoplasmic-facing. Residues 87 to 107 (PSVIYTINLVVTDLLVGLSLP) form a helical membrane-spanning segment. Over 108–125 (TRFAVYYGARGCLRCAFP) the chain is Extracellular. Residues 126 to 146 (HVLGYFLNMHCSILFLTCICV) form a helical membrane-spanning segment. The Cytoplasmic segment spans residues 147 to 168 (DRYLAIVRPEGSRRCRQPACAR). The helical transmembrane segment at 169-189 (AVCAFVWLAAGAVTLSVLGVT) threads the bilayer. At 190–196 (GSRPCCR) the chain is on the extracellular side. A helical transmembrane segment spans residues 197 to 217 (VFALTVLEFLLPLLVISVFTG). The Cytoplasmic portion of the chain corresponds to 218 to 238 (RIMCALSRPGLLHQGRQRRVR). The chain crosses the membrane as a helical span at residues 239 to 259 (AMQLLLTVLIIFLVCFTPFHA). Over 260–275 (RQVAVALWPDMPHHTS) the chain is Extracellular. Residues 276–296 (LVVYHVAVTLSSLNSCMDPIV) form a helical membrane-spanning segment. Residues 297-358 (YCFVTSGFQA…TQALANGPEA (62 aa)) are Cytoplasmic-facing. The disordered stretch occupies residues 315 to 339 (HGEREPSSGDVVSMHRSSKGSGRHH). Basic residues predominate over residues 330 to 339 (RSSKGSGRHH).

This sequence belongs to the G-protein coupled receptor 1 family. Ubiquitous with highest levels in intestinal tissues. In the brain detected in thalamus, putamen, and caudate, but not in frontal cortex, pons and hypothalamus.

Its subcellular location is the cell membrane. In terms of biological role, orphan receptor with constitutive G(i) signaling activity that activate cyclic AMP. This Homo sapiens (Human) protein is G-protein coupled receptor 20 (GPR20).